A 196-amino-acid polypeptide reads, in one-letter code: Nodulation protein A (196 aa).

It belongs to the NodA family.

It localises to the cytoplasm. In terms of biological role, N-acyltransferase required for nodulation. Acts in the production of a small, heat-stable compound (Nod) that stimulates mitosis in various plant protoplasts. The chain is Nodulation protein A from Mesorhizobium plurifarium.